Consider the following 445-residue polypeptide: Chromosome partition protein MukF (445 aa).

The tract at residues 213-241 is leucine-zipper; sequence LSETSATLRELQDTLQAAGDELQTQILDI.

It belongs to the MukF family. In terms of assembly, interacts, and probably forms a ternary complex, with MukE and MukB via its C-terminal region. The complex formation is stimulated by calcium or magnesium. It is required for an interaction between MukE and MukB.

It is found in the cytoplasm. Its subcellular location is the nucleoid. Involved in chromosome condensation, segregation and cell cycle progression. May participate in facilitating chromosome segregation by condensation DNA from both sides of a centrally located replisome during cell division. Not required for mini-F plasmid partitioning. Probably acts via its interaction with MukB and MukE. Overexpression results in anucleate cells. It has a calcium binding activity. The polypeptide is Chromosome partition protein MukF (Vibrio cholerae serotype O1 (strain ATCC 39315 / El Tor Inaba N16961)).